The sequence spans 458 residues: UDP-N-acetylmuramate--L-alanine ligase (458 aa).

Position 112–118 (112–118 (GTHGKTT)) interacts with ATP.

The protein belongs to the MurCDEF family.

Its subcellular location is the cytoplasm. The catalysed reaction is UDP-N-acetyl-alpha-D-muramate + L-alanine + ATP = UDP-N-acetyl-alpha-D-muramoyl-L-alanine + ADP + phosphate + H(+). Its pathway is cell wall biogenesis; peptidoglycan biosynthesis. Cell wall formation. The chain is UDP-N-acetylmuramate--L-alanine ligase from Geotalea uraniireducens (strain Rf4) (Geobacter uraniireducens).